The sequence spans 441 residues: Zinc finger and BTB domain-containing protein 8A (441 aa).

One can recognise a BTB domain in the interval 24–92; it reads CDCSILVEGK…VYSGKLSLTG (69 aa). Polar residues-rich tracts occupy residues 146–170 and 178–197; these read ERSSFYSSGWQDESSSPRSHLSPDQ and KSWSKYNYHPASQRNTQQPL. The interval 146 to 252 is disordered; sequence ERSSFYSSGW…SEEQAQMNAE (107 aa). Residues Ser-161 and Ser-167 each carry the phosphoserine modification. Glycyl lysine isopeptide (Lys-Gly) (interchain with G-Cter in SUMO2) cross-links involve residues Lys-178, Lys-182, and Lys-199. A compositionally biased stretch (basic and acidic residues) spans 198–208; sequence TKHEQRKDSIK. Residues 234–248 show a composition bias toward low complexity; the sequence is SDSSSHASQSEEQAQ. 2 C2H2-type zinc fingers span residues 282-304 and 310-333; these read FKCPYCTHVVKRKADLKRHLRCH and YPCQACGKRFSRLDHLSSHFRTIH. Lys-437 participates in a covalent cross-link: Glycyl lysine isopeptide (Lys-Gly) (interchain with G-Cter in SUMO2).

It is found in the nucleus. Its function is as follows. May be involved in transcriptional regulation. The protein is Zinc finger and BTB domain-containing protein 8A (ZBTB8A) of Bos taurus (Bovine).